Reading from the N-terminus, the 198-residue chain is Nucleoid occlusion factor SlmA (198 aa).

The region spanning 10 to 70 (NRREEILQSL…SLIEFIEDSL (61 aa)) is the HTH tetR-type domain. Residues 33–52 (TTAKLAASVGVSEAALYRHF) constitute a DNA-binding region (H-T-H motif). The stretch at 117–144 (EQDRLQGRINQLFERIEAQLRQVLREKR) forms a coiled coil.

It belongs to the nucleoid occlusion factor SlmA family. Homodimer. Interacts with FtsZ.

The protein localises to the cytoplasm. It localises to the nucleoid. In terms of biological role, required for nucleoid occlusion (NO) phenomenon, which prevents Z-ring formation and cell division over the nucleoid. Acts as a DNA-associated cell division inhibitor that binds simultaneously chromosomal DNA and FtsZ, and disrupts the assembly of FtsZ polymers. SlmA-DNA-binding sequences (SBS) are dispersed on non-Ter regions of the chromosome, preventing FtsZ polymerization at these regions. The polypeptide is Nucleoid occlusion factor SlmA (Escherichia coli O45:K1 (strain S88 / ExPEC)).